A 363-amino-acid polypeptide reads, in one-letter code: Heme A synthase (363 aa).

The next 8 membrane-spanning stretches (helical) occupy residues 21–41, 107–127, 138–158, 174–194, 207–227, 268–288, 301–321, and 323–343; these read ALVR…VLVG, RLLA…FWVS, LVGI…MVAS, HLTL…GLAP, LAGF…LVAG, FVHR…MIAT, ATLL…TLLM, and VPLH…GFAA. Histidine 270 contributes to the heme binding site. Histidine 331 contributes to the heme binding site.

Belongs to the COX15/CtaA family. Type 2 subfamily. As to quaternary structure, interacts with CtaB. It depends on heme b as a cofactor.

It is found in the cell membrane. The catalysed reaction is Fe(II)-heme o + 2 A + H2O = Fe(II)-heme a + 2 AH2. It functions in the pathway porphyrin-containing compound metabolism; heme A biosynthesis; heme A from heme O: step 1/1. Functionally, catalyzes the conversion of heme O to heme A by two successive hydroxylations of the methyl group at C8. The first hydroxylation forms heme I, the second hydroxylation results in an unstable dihydroxymethyl group, which spontaneously dehydrates, resulting in the formyl group of heme A. The protein is Heme A synthase of Mesorhizobium japonicum (strain LMG 29417 / CECT 9101 / MAFF 303099) (Mesorhizobium loti (strain MAFF 303099)).